The primary structure comprises 565 residues: Oxygen-dependent choline dehydrogenase (565 aa).

FAD is bound at residue 7–36 (DYIICGAGSAGNVLATRLTEDPDVTVLLLE). Catalysis depends on His-474, which acts as the Proton acceptor.

This sequence belongs to the GMC oxidoreductase family. FAD is required as a cofactor.

It catalyses the reaction choline + A = betaine aldehyde + AH2. The enzyme catalyses betaine aldehyde + NAD(+) + H2O = glycine betaine + NADH + 2 H(+). Its pathway is amine and polyamine biosynthesis; betaine biosynthesis via choline pathway; betaine aldehyde from choline (cytochrome c reductase route): step 1/1. Involved in the biosynthesis of the osmoprotectant glycine betaine. Catalyzes the oxidation of choline to betaine aldehyde and betaine aldehyde to glycine betaine at the same rate. This is Oxygen-dependent choline dehydrogenase from Burkholderia thailandensis (strain ATCC 700388 / DSM 13276 / CCUG 48851 / CIP 106301 / E264).